We begin with the raw amino-acid sequence, 723 residues long: Transmembrane channel-like protein 7 (723 aa).

The segment at 1–21 (MSESSASALQLGRPSRQPAVH) is disordered. Residues 1-168 (MSESSASALQ…GIQSYFSFLR (168 aa)) are Extracellular-facing. Asparagine 24 carries N-linked (GlcNAc...) asparagine glycosylation. Residues 51–70 (RRRTTVHSRDKQSGTLLKST) form a disordered region. Asparagine 84 carries an N-linked (GlcNAc...) asparagine glycan. Serine 89 bears the Phosphoserine mark. An N-linked (GlcNAc...) asparagine glycan is attached at asparagine 96. The helical transmembrane segment at 169–189 (FLVLLNLVIFLIIFMLVLLPI) threads the bilayer. Residues 190-219 (LLTKYKITNSSFVLIPFKDTDIQCTVYPVS) lie on the Cytoplasmic side of the membrane. The helical transmembrane segment at 220 to 240 (SSGLIYFYSYIIDLLSGTGFL) threads the bilayer. Residues 241–263 (EETSLFYGHYTIDGVKFQNFTYD) are Extracellular-facing. Asparagine 259 carries an N-linked (GlcNAc...) asparagine glycan. A helical membrane pass occupies residues 264–284 (LPLAYLISTIAYLALSLLWIV). Topologically, residues 285 to 362 (KRSVEGFKIN…EETIRIYSLR (78 aa)) are cytoplasmic. The chain crosses the membrane as a helical span at residues 363 to 383 (LFLNCIVLAVLGACFYAIYVA). At 384–404 (TVFSQEHMKKEIDKMVFGENL) the chain is on the extracellular side. A helical transmembrane segment spans residues 405–425 (LILYLPSIVITLANFITPMIF). The Cytoplasmic segment spans residues 426-494 (AKIIRYEDYS…PCWETQVGQE (69 aa)). Residues 495–515 (MYKLMIFDFIIILAVTLFVDF) traverse the membrane as a helical segment. At 516-555 (PRKLLVTYCSSWKLIQCWGQQEFAIPDNVLGIVYGQTICW) the chain is on the extracellular side. The chain crosses the membrane as a helical span at residues 556 to 576 (IGAFFSPLLPAIATLKFIIIF). Residues 577–601 (YVKEWSLLYTCRPSPRPFRASNSNF) lie on the Cytoplasmic side of the membrane. A helical transmembrane segment spans residues 602-622 (FFLLVLLIGLCLAIIPLTISI). Residues 623-665 (SRIPSSKACGPFTNFNTTWEVIPKTVSTFPSSLQSFIHGVTSE) lie on the Extracellular side of the membrane. N-linked (GlcNAc...) asparagine glycosylation is present at asparagine 638. The chain crosses the membrane as a helical span at residues 666–686 (AFAVPFFMIICLIMFYFIALA). Residues 687–723 (GAHKRVVIQLREQLSLESRDKRYLIQKLTEAQRDTRN) are Cytoplasmic-facing.

This sequence belongs to the TMC family. Interacts with PIEZO2; the interaction inhibits PIEZO2-conducted mechanically activated currents.

It is found in the membrane. Functionally, acts as an inhibitory modulator of PIEZO2 mechanosensitive channel in dorsal root ganglion (DRG) neurons through physical interactions or interference with the interaction between Piezo2 and the cytoskeleton. In Macaca fascicularis (Crab-eating macaque), this protein is Transmembrane channel-like protein 7 (TMC7).